Reading from the N-terminus, the 309-residue chain is uncharacterized protein (309 aa).

Over residues 1–11 the composition is skewed to basic residues; that stretch reads MPGNSRRRGAV. The interval 1–69 is disordered; it reads MPGNSRRRGA…PVKRTDETET (69 aa). S-adenosyl-L-methionine is bound by residues Gly261, Ile281, and Leu290.

It belongs to the class IV-like SAM-binding methyltransferase superfamily. RNA methyltransferase TrmH family.

This is an uncharacterized protein from Mycobacterium leprae (strain TN).